Here is a 338-residue protein sequence, read N- to C-terminus: Ketol-acid reductoisomerase (NADP(+)) (338 aa).

In terms of domain architecture, KARI N-terminal Rossmann spans 1–181; sequence MKVFYDKDCD…GGGRTGIIET (181 aa). NADP(+)-binding positions include 24–27, R47, S50, T52, and 82–85; these read YGSQ and DEFQ. H107 is a catalytic residue. G133 contacts NADP(+). A KARI C-terminal knotted domain is found at 182–327; it reads TFKDETETDL…EKLRSMMPWI (146 aa). Mg(2+)-binding residues include D190, E194, E226, and E230. Position 251 (S251) interacts with substrate.

Belongs to the ketol-acid reductoisomerase family. Requires Mg(2+) as cofactor.

The catalysed reaction is (2R)-2,3-dihydroxy-3-methylbutanoate + NADP(+) = (2S)-2-acetolactate + NADPH + H(+). It carries out the reaction (2R,3R)-2,3-dihydroxy-3-methylpentanoate + NADP(+) = (S)-2-ethyl-2-hydroxy-3-oxobutanoate + NADPH + H(+). Its pathway is amino-acid biosynthesis; L-isoleucine biosynthesis; L-isoleucine from 2-oxobutanoate: step 2/4. The protein operates within amino-acid biosynthesis; L-valine biosynthesis; L-valine from pyruvate: step 2/4. Functionally, involved in the biosynthesis of branched-chain amino acids (BCAA). Catalyzes an alkyl-migration followed by a ketol-acid reduction of (S)-2-acetolactate (S2AL) to yield (R)-2,3-dihydroxy-isovalerate. In the isomerase reaction, S2AL is rearranged via a Mg-dependent methyl migration to produce 3-hydroxy-3-methyl-2-ketobutyrate (HMKB). In the reductase reaction, this 2-ketoacid undergoes a metal-dependent reduction by NADPH to yield (R)-2,3-dihydroxy-isovalerate. In Pseudomonas syringae pv. tomato (strain ATCC BAA-871 / DC3000), this protein is Ketol-acid reductoisomerase (NADP(+)).